The primary structure comprises 139 residues: Large ribosomal subunit protein uL22 (139 aa).

The segment at 1 to 21 is disordered; the sequence is MTAPTPEFRNKKQRKQQVKLR.

This sequence belongs to the universal ribosomal protein uL22 family. In terms of assembly, part of the 50S ribosomal subunit.

This protein binds specifically to 23S rRNA; its binding is stimulated by other ribosomal proteins, e.g. L4, L17, and L20. It is important during the early stages of 50S assembly. It makes multiple contacts with different domains of the 23S rRNA in the assembled 50S subunit and ribosome. In terms of biological role, the globular domain of the protein is located near the polypeptide exit tunnel on the outside of the subunit, while an extended beta-hairpin is found that lines the wall of the exit tunnel in the center of the 70S ribosome. The sequence is that of Large ribosomal subunit protein uL22 from Deinococcus deserti (strain DSM 17065 / CIP 109153 / LMG 22923 / VCD115).